A 248-amino-acid polypeptide reads, in one-letter code: Tropomyosin alpha-4 chain (248 aa).

At alanine 2 the chain carries N-acetylalanine. Residues 2-248 (AGLNSLEAVK…DQTLDELNCI (247 aa)) adopt a coiled-coil conformation. A Phosphoserine modification is found at serine 6. Positions 16–47 (ALQQQADEAEDRAQGLQRELDGERERREKAEG) are disordered. Over residues 33 to 47 (RELDGERERREKAEG) the composition is skewed to basic and acidic residues. Lysine 177 and lysine 215 each carry N6-acetyllysine. Threonine 216 is modified (phosphothreonine).

This sequence belongs to the tropomyosin family. In terms of assembly, homodimer. Heterodimer of an alpha (TPM1, TPM3 or TPM4) and a beta (TPM2) chain.

It localises to the cytoplasm. Its subcellular location is the cytoskeleton. Its function is as follows. Binds to actin filaments in muscle and non-muscle cells. Plays a central role, in association with the troponin complex, in the calcium dependent regulation of vertebrate striated muscle contraction. Smooth muscle contraction is regulated by interaction with caldesmon. In non-muscle cells is implicated in stabilizing cytoskeleton actin filaments. Binds calcium. This chain is Tropomyosin alpha-4 chain (TPM4), found in Equus caballus (Horse).